Consider the following 295-residue polypeptide: Probable ketoamine kinase slr1563 (295 aa).

ATP is bound at residue Glu99–Leu101. The active-site Proton acceptor is Asp201.

It belongs to the fructosamine kinase family.

Ketoamine kinase that phosphorylates ketoamines on the third carbon of the sugar moiety to generate ketoamine 3-phosphate. In Synechocystis sp. (strain ATCC 27184 / PCC 6803 / Kazusa), this protein is Probable ketoamine kinase slr1563.